Here is a 151-residue protein sequence, read N- to C-terminus: uncharacterized protein (151 aa).

[4Fe-4S] cluster contacts are provided by Cys24, Cys27, Cys92, and Cys129.

Belongs to the complex I 20 kDa subunit family. The cofactor is [4Fe-4S] cluster.

This is an uncharacterized protein from Methanocaldococcus jannaschii (strain ATCC 43067 / DSM 2661 / JAL-1 / JCM 10045 / NBRC 100440) (Methanococcus jannaschii).